Consider the following 59-residue polypeptide: Large ribosomal subunit protein uL30 (59 aa).

This sequence belongs to the universal ribosomal protein uL30 family. In terms of assembly, part of the 50S ribosomal subunit.

The chain is Large ribosomal subunit protein uL30 from Buchnera aphidicola subsp. Acyrthosiphon pisum (strain 5A).